The primary structure comprises 123 residues: WAP four-disulfide core domain protein 2 (123 aa).

A signal peptide spans 1–28; sequence MPASRLVPLGAVLLLGLLLLLELPPVTG. WAP domains are found at residues 30–71 and 74–122; these read GADK…SAIC and PNEK…VTPN. Disulfide bonds link Cys-37-Cys-63, Cys-46-Cys-67, Cys-50-Cys-62, Cys-56-Cys-71, Cys-81-Cys-109, Cys-92-Cys-113, Cys-96-Cys-108, and Cys-102-Cys-118. N-linked (GlcNAc...) asparagine glycosylation is present at Asn-45.

In terms of assembly, homotrimer; disulfide-linked. Epididymis.

It is found in the secreted. Its function is as follows. Broad range protease inhibitor. In Oryctolagus cuniculus (Rabbit), this protein is WAP four-disulfide core domain protein 2 (WFDC2).